A 162-amino-acid polypeptide reads, in one-letter code: UPF0303 protein RL3365 (162 aa).

The protein belongs to the UPF0303 family.

This is UPF0303 protein RL3365 from Rhizobium johnstonii (strain DSM 114642 / LMG 32736 / 3841) (Rhizobium leguminosarum bv. viciae).